Reading from the N-terminus, the 283-residue chain is Bifunctional protein FolD (283 aa).

Residues 165 to 167 (GRS), Ser190, and Thr231 each bind NADP(+).

It belongs to the tetrahydrofolate dehydrogenase/cyclohydrolase family. As to quaternary structure, homodimer.

It carries out the reaction (6R)-5,10-methylene-5,6,7,8-tetrahydrofolate + NADP(+) = (6R)-5,10-methenyltetrahydrofolate + NADPH. The catalysed reaction is (6R)-5,10-methenyltetrahydrofolate + H2O = (6R)-10-formyltetrahydrofolate + H(+). It functions in the pathway one-carbon metabolism; tetrahydrofolate interconversion. Functionally, catalyzes the oxidation of 5,10-methylenetetrahydrofolate to 5,10-methenyltetrahydrofolate and then the hydrolysis of 5,10-methenyltetrahydrofolate to 10-formyltetrahydrofolate. The protein is Bifunctional protein FolD of Nocardia farcinica (strain IFM 10152).